The following is a 568-amino-acid chain: 2-succinyl-5-enolpyruvyl-6-hydroxy-3-cyclohexene-1-carboxylate synthase (568 aa).

It belongs to the TPP enzyme family. MenD subfamily. As to quaternary structure, homodimer. Mg(2+) serves as cofactor. It depends on Mn(2+) as a cofactor. Thiamine diphosphate is required as a cofactor.

The enzyme catalyses isochorismate + 2-oxoglutarate + H(+) = 5-enolpyruvoyl-6-hydroxy-2-succinyl-cyclohex-3-ene-1-carboxylate + CO2. It participates in quinol/quinone metabolism; 1,4-dihydroxy-2-naphthoate biosynthesis; 1,4-dihydroxy-2-naphthoate from chorismate: step 2/7. Its pathway is quinol/quinone metabolism; menaquinone biosynthesis. Functionally, catalyzes the thiamine diphosphate-dependent decarboxylation of 2-oxoglutarate and the subsequent addition of the resulting succinic semialdehyde-thiamine pyrophosphate anion to isochorismate to yield 2-succinyl-5-enolpyruvyl-6-hydroxy-3-cyclohexene-1-carboxylate (SEPHCHC). The chain is 2-succinyl-5-enolpyruvyl-6-hydroxy-3-cyclohexene-1-carboxylate synthase from Actinobacillus pleuropneumoniae serotype 7 (strain AP76).